The chain runs to 501 residues: NAD(P)H-quinone oxidoreductase subunit 2, chloroplastic (501 aa).

The next 14 membrane-spanning stretches (helical) occupy residues 15–35 (ILPECILIFSLLIILIIDLTF), 40–60 (TIWLYFISLTSLLISIIILLF), 82–102 (IFQSFIVFCSILCIPLSIEYI), 107–127 (MAIPEFLIFILTATVGGMFLC), 132–152 (LVTIFVSLECLSLCSYLLCGY), 167–187 (LLIGGTSSSILAYGFSWLYGL), 212–232 (TFIAFICILVGLAFKLSLVPF), 244–264 (PTPVVAFLSVTSKIAGLALAT), 278–298 (WKIFLEILAILSMILGNLVAI), 307–327 (LAYSSISQIGYILIGLITGDL), 333–353 (MTIYVFFYIFMNLGTFACIIL), 378–398 (FSLTLCLLSLGGLPPLTGFFG), 410–430 (GFYLLVFIALITSVISLYYYL), and 466–486 (FVMIFCVLGSTFLGIIINPIF).

Belongs to the complex I subunit 2 family. NDH is composed of at least 16 different subunits, 5 of which are encoded in the nucleus.

The protein localises to the plastid. It is found in the chloroplast thylakoid membrane. The enzyme catalyses a plastoquinone + NADH + (n+1) H(+)(in) = a plastoquinol + NAD(+) + n H(+)(out). The catalysed reaction is a plastoquinone + NADPH + (n+1) H(+)(in) = a plastoquinol + NADP(+) + n H(+)(out). In terms of biological role, NDH shuttles electrons from NAD(P)H:plastoquinone, via FMN and iron-sulfur (Fe-S) centers, to quinones in the photosynthetic chain and possibly in a chloroplast respiratory chain. The immediate electron acceptor for the enzyme in this species is believed to be plastoquinone. Couples the redox reaction to proton translocation, and thus conserves the redox energy in a proton gradient. The protein is NAD(P)H-quinone oxidoreductase subunit 2, chloroplastic of Marchantia polymorpha (Common liverwort).